A 2259-amino-acid chain; its full sequence is Golgin subfamily A member 4 (2259 aa).

Residues 1-54 are disordered; that stretch reads MFKKLKQKISEEQQQLQQALAPAQASSSSSTPTRTRSRTSSFTDQLDDATPNRE. Position 10 is a phosphoserine (serine 10). Over residues 12 to 41 the composition is skewed to low complexity; sequence EQQQLQQALAPAQASSSSSTPTRTRSRTSS. The residue at position 39 (threonine 39) is a Phosphothreonine. Serine 41, serine 104, and serine 111 each carry phosphoserine. Positions 165-235 are interaction with MACF1; sequence SLSREQLLQR…EELQMDQQAK (71 aa). Positions 167-2182 form a coiled coil; sequence SREQLLQRLR…SYEKSVCAAA (2016 aa). Composition is skewed to basic and acidic residues over residues 1932–1946 and 1954–1977; these read LEDR…HVIE and DGRH…LSKE. The interval 1932–1977 is disordered; it reads LEDRPEENSKSHVIESKLGTPMDGRHSDLESKLAGSEREKQKLSKE. Residues 2199-2246 enclose the GRIP domain; the sequence is LFGEPTEFEYLRKVLFEYMMGRETKTMAKVITTVLRFPDDQAQKILER.

As to quaternary structure, homodimer. Interacts with GTP-bound ARL1 and ARL3. Interacts with MACF1. Directly interacts with TBC1D23. Interacts with FAM91A1; this interaction may be mediated by TBC1D23. As to expression, expressed in the head of epididymal sperm but not in testicular sperm (at protein level).

Its subcellular location is the cytoplasm. It is found in the golgi apparatus membrane. It localises to the golgi apparatus. The protein localises to the trans-Golgi network membrane. Involved in vesicular trafficking at the Golgi apparatus level. May play a role in delivery of transport vesicles containing GPI-linked proteins from the trans-Golgi network through its interaction with MACF1. Involved in endosome-to-Golgi trafficking. This Rattus norvegicus (Rat) protein is Golgin subfamily A member 4.